We begin with the raw amino-acid sequence, 283 residues long: Putative F-box protein At1g60370 (283 aa).

An F-box domain is found at 4 to 53 (GEKLESIPIDLIIEIHSRLPAESVARFRCVSKLWGSMFRRPYFTELFLTR).

This chain is Putative F-box protein At1g60370, found in Arabidopsis thaliana (Mouse-ear cress).